Here is a 162-residue protein sequence, read N- to C-terminus: uncharacterized protein (162 aa).

This is an uncharacterized protein from Schizosaccharomyces pombe (strain 972 / ATCC 24843) (Fission yeast).